The sequence spans 386 residues: tRNA N6-adenosine threonylcarbamoyltransferase (386 aa).

The Fe cation site is built by His112 and His116. Residues Leu134 to Gly138, Asp167, Gly180, and Asn322 contribute to the substrate site. Asp350 contacts Fe cation.

Belongs to the KAE1 / TsaD family. Fe(2+) is required as a cofactor.

The protein localises to the cytoplasm. The enzyme catalyses L-threonylcarbamoyladenylate + adenosine(37) in tRNA = N(6)-L-threonylcarbamoyladenosine(37) in tRNA + AMP + H(+). Its function is as follows. Required for the formation of a threonylcarbamoyl group on adenosine at position 37 (t(6)A37) in tRNAs that read codons beginning with adenine. Is involved in the transfer of the threonylcarbamoyl moiety of threonylcarbamoyl-AMP (TC-AMP) to the N6 group of A37, together with TsaE and TsaB. TsaD likely plays a direct catalytic role in this reaction. In Rickettsia akari (strain Hartford), this protein is tRNA N6-adenosine threonylcarbamoyltransferase.